The primary structure comprises 637 residues: Threonine--tRNA ligase (637 aa).

The 61-residue stretch at 1-61 (MPVITLPNGS…EQDAALSIVT (61 aa)) folds into the TGS domain. The interval 242–533 (DHRKLGKKFD…LIENYEGAFP (292 aa)) is catalytic. Zn(2+) is bound by residues cysteine 333, histidine 384, and histidine 510.

The protein belongs to the class-II aminoacyl-tRNA synthetase family. Homodimer. Zn(2+) is required as a cofactor.

The protein localises to the cytoplasm. It catalyses the reaction tRNA(Thr) + L-threonine + ATP = L-threonyl-tRNA(Thr) + AMP + diphosphate + H(+). In terms of biological role, catalyzes the attachment of threonine to tRNA(Thr) in a two-step reaction: L-threonine is first activated by ATP to form Thr-AMP and then transferred to the acceptor end of tRNA(Thr). Also edits incorrectly charged L-seryl-tRNA(Thr). The sequence is that of Threonine--tRNA ligase from Teredinibacter turnerae (strain ATCC 39867 / T7901).